Reading from the N-terminus, the 1201-residue chain is DNA-directed RNA polymerase subunit beta (1201 aa).

A disordered region spans residues 1165–1201; that stretch reads DALSKFKQQQDEKAADKAAKADAAKPSETTNAQQDNQ. The segment covering 1172–1189 has biased composition (basic and acidic residues); sequence QQQDEKAADKAAKADAAK. Residues 1191-1201 are compositionally biased toward polar residues; the sequence is SETTNAQQDNQ.

The protein belongs to the RNA polymerase beta chain family. The RNAP catalytic core consists of 2 alpha, 1 beta, 1 beta' and 1 omega subunit. When a sigma factor is associated with the core the holoenzyme is formed, which can initiate transcription.

It catalyses the reaction RNA(n) + a ribonucleoside 5'-triphosphate = RNA(n+1) + diphosphate. Its function is as follows. DNA-dependent RNA polymerase catalyzes the transcription of DNA into RNA using the four ribonucleoside triphosphates as substrates. In Lactiplantibacillus plantarum (strain ATCC BAA-793 / NCIMB 8826 / WCFS1) (Lactobacillus plantarum), this protein is DNA-directed RNA polymerase subunit beta.